Here is a 74-residue protein sequence, read N- to C-terminus: U4-theraphotoxin-Cg1a (74 aa).

The signal sequence occupies residues 1-19 (MNATIFALLLLLNLAMYNA). Residues 20–39 (AEQSSETDMDDTLLIPEINR) constitute a propeptide that is removed on maturation. Cystine bridges form between C42/C56, C49/C61, and C55/C71.

The protein belongs to the neurotoxin 36 family. 01 subfamily. As to expression, expressed by the venom gland.

It is found in the secreted. Functionally, probable ion channel inhibitor. The chain is U4-theraphotoxin-Cg1a from Chilobrachys guangxiensis (Chinese earth tiger tarantula).